The following is a 645-amino-acid chain: Putative bifunctional exonuclease/endonuclease protein MT2247 (645 aa).

An Exonuclease domain is found at 44-207 (VVVDLETTGG…DDARATVDVL (164 aa)). The GIY-YIG domain maps to 248-326 (HRPGVYLFRG…LSTHAPPYNR (79 aa)). The interval 603-645 (WQSDLPTEPHPSREQLFGRTGVDCRTGPPQPLLPGRQPFSTAG) is disordered. Over residues 635–645 (LPGRQPFSTAG) the composition is skewed to low complexity.

The chain is Putative bifunctional exonuclease/endonuclease protein MT2247 from Mycobacterium tuberculosis (strain CDC 1551 / Oshkosh).